The following is a 326-amino-acid chain: o-succinylbenzoate synthase (326 aa).

The active-site Proton donor is lysine 110. Residues aspartate 138, glutamate 165, and aspartate 188 each contribute to the Mg(2+) site. Catalysis depends on lysine 212, which acts as the Proton acceptor.

This sequence belongs to the mandelate racemase/muconate lactonizing enzyme family. MenC type 1 subfamily. The cofactor is a divalent metal cation.

It catalyses the reaction (1R,6R)-6-hydroxy-2-succinyl-cyclohexa-2,4-diene-1-carboxylate = 2-succinylbenzoate + H2O. Its pathway is quinol/quinone metabolism; 1,4-dihydroxy-2-naphthoate biosynthesis; 1,4-dihydroxy-2-naphthoate from chorismate: step 4/7. It functions in the pathway quinol/quinone metabolism; menaquinone biosynthesis. Its function is as follows. Converts 2-succinyl-6-hydroxy-2,4-cyclohexadiene-1-carboxylate (SHCHC) to 2-succinylbenzoate (OSB). This is o-succinylbenzoate synthase from Mycobacterium bovis (strain ATCC BAA-935 / AF2122/97).